We begin with the raw amino-acid sequence, 359 residues long: Spore germination protein GerQC (359 aa).

A signal peptide spans 1-16 (MKRWILFLILSVFLIG). The N-palmitoyl cysteine moiety is linked to residue Cys-17. Cys-17 is lipidated: S-diacylglycerol cysteine.

It belongs to the GerABKC lipoprotein family.

The protein localises to the membrane. In terms of biological role, required for the germination response to inosine. Has no role in L-alanine germination. This chain is Spore germination protein GerQC (gerQC), found in Bacillus cereus.